Consider the following 639-residue polypeptide: CTTNBP2 N-terminal-like protein (639 aa).

The stretch at 87–285 (MKQCKNMQER…DLEASHQHSS (199 aa)) forms a coiled coil. Ser-284 and Ser-285 each carry phosphoserine. Disordered regions lie at residues 387–430 (VENG…PCSS), 463–490 (RHKF…LSPT), and 511–609 (RFTS…AASL). 2 stretches are compositionally biased toward low complexity: residues 405–430 (PLSS…PCSS) and 467–477 (QSQADQDQQAS). Phosphoserine occurs at positions 481, 488, 523, 527, 560, 563, and 568. The span at 511-529 (RFTSQQGPIKPVSPNSSPF) shows a compositional bias: polar residues. A phosphothreonine mark is found at Thr-570 and Thr-590. Over residues 587-600 (PGLTPSPSATTPLT) the composition is skewed to low complexity. Ser-592 is modified (phosphoserine).

In terms of assembly, interacts with CTTN/cortactin; this interaction may redistribute CTTN to stress fibers. May form homomers. Associates with the core of STRIPAK complexes composed of PP2A catalytic and scaffolding subunits, the striatins (PP2A regulatory subunits), the striatin-associated proteins MOB4, STRIP1 and STRIP2, PDCD10 and members of the STE20 kinases, such as STK24 and STK26.

The protein localises to the cell projection. The protein resides in the lamellipodium. Its subcellular location is the cytoplasm. It localises to the cytoskeleton. It is found in the stress fiber. In terms of biological role, regulates lamellipodial actin dynamics in a CTTN-dependent manner. Associates with core striatin-interacting phosphatase and kinase (STRIPAK) complex to form CTTNBP2NL-STRIPAK complexes. STRIPAK complexes have critical roles in protein (de)phosphorylation and are regulators of multiple signaling pathways including Hippo, MAPK, nuclear receptor and cytoskeleton remodeling. Different types of STRIPAK complexes are involved in a variety of biological processes such as cell growth, differentiation, apoptosis, metabolism and immune regulation. The polypeptide is CTTNBP2 N-terminal-like protein (Homo sapiens (Human)).